Reading from the N-terminus, the 388-residue chain is Succinate--CoA ligase [ADP-forming] subunit beta (388 aa).

One can recognise an ATP-grasp domain in the interval 9–244; the sequence is KQIFAKYKLP…PSQDDPREAL (236 aa). ATP-binding positions include Lys-46, 53-55, Glu-99, Ala-102, and Glu-107; that span reads GRG. Positions 199 and 213 each coordinate Mg(2+). Residues Asn-264 and 321 to 323 contribute to the substrate site; that span reads GIV.

Belongs to the succinate/malate CoA ligase beta subunit family. As to quaternary structure, heterotetramer of two alpha and two beta subunits. Mg(2+) is required as a cofactor.

It catalyses the reaction succinate + ATP + CoA = succinyl-CoA + ADP + phosphate. It carries out the reaction GTP + succinate + CoA = succinyl-CoA + GDP + phosphate. Its pathway is carbohydrate metabolism; tricarboxylic acid cycle; succinate from succinyl-CoA (ligase route): step 1/1. Functionally, succinyl-CoA synthetase functions in the citric acid cycle (TCA), coupling the hydrolysis of succinyl-CoA to the synthesis of either ATP or GTP and thus represents the only step of substrate-level phosphorylation in the TCA. The beta subunit provides nucleotide specificity of the enzyme and binds the substrate succinate, while the binding sites for coenzyme A and phosphate are found in the alpha subunit. This is Succinate--CoA ligase [ADP-forming] subunit beta from Glaesserella parasuis serovar 5 (strain SH0165) (Haemophilus parasuis).